Consider the following 1385-residue polypeptide: Defecation cycle abnormal dec-7 (1385 aa).

A signal peptide spans 1–19 (MWTARHAVALLVVLTYAYS). Asn-156 carries an N-linked (GlcNAc...) asparagine glycan. Residues 234–262 (SQTNYGAPNYQQAGAQSAANQQFSNPSQY) are disordered. A compositionally biased stretch (low complexity) spans 242–261 (NYQQAGAQSAANQQFSNPSQ). Positions 285–450 (QIYGKRKKRQ…GRWIHRVDEV (166 aa)) constitute an NIDO domain. 7 N-linked (GlcNAc...) asparagine glycosylation sites follow: Asn-313, Asn-386, Asn-413, Asn-458, Asn-480, Asn-562, and Asn-583. Positions 681–840 (GRNWPIDMCI…DHCEFYYWRR (160 aa)) constitute an AMOP domain. The 237-residue stretch at 852–1088 (AAGYIYGEPH…FWKIDGTNDK (237 aa)) folds into the VWFD domain. Residues Asn-909, Asn-921, Asn-975, Asn-1009, and Asn-1124 are each glycosylated (N-linked (GlcNAc...) asparagine). A Sushi domain is found at 1179–1238 (ISCGPLLKKEGVVKTPPAANYLDGDKVVFSCKPKYYIHGDIERVCRNGTWSPGWWAWCRD). 2 disulfide bridges follow: Cys-1181–Cys-1223 and Cys-1209–Cys-1236. Asn-1225 is a glycosylation site (N-linked (GlcNAc...) asparagine). Residues 1251-1271 (LLSIFGISLIFVIFFCILWNI) traverse the membrane as a helical segment. The disordered stretch occupies residues 1321–1385 (MNQPSRPIPS…GNMRFETSAI (65 aa)).

Highly expressed in the intestinal epithelia.

It localises to the membrane. It is found in the cell junction. In terms of biological role, may negatively regulate activity of innexin gap junction protein inx-16, thereby mediating the rhythmic frequency of the defecation motor program. Required for the clustering of inx-16 to the cell-cell junction of the intestinal epithelia. Probably dispensable for intestinal integrity. May be a cytokine receptor. The protein is Defecation cycle abnormal dec-7 of Caenorhabditis elegans.